The primary structure comprises 1353 residues: Trifunctional purine biosynthetic protein adenosine-3 (1353 aa).

Residues 114-321 (KDFMLRHGIP…LFDVMEACCS (208 aa)) enclose the ATP-grasp domain. ATP contacts are provided by residues 193 to 196 (EELL), E200, R223, and N232. Mg(2+) is bound by residues E291 and N293. Positions 441 to 1155 (GLSYKDSGVD…QKMLSQRRKR (715 aa)) are AIRS domain. Phosphoserine is present on residues S814 and S816. The GART domain stretch occupies residues 1153–1353 (RKRVAVLISG…ALISPEVSSQ (201 aa)). Residue 1164–1166 (GSN) coordinates N(1)-(5-phospho-beta-D-ribosyl)glycinamide. (6R)-10-formyltetrahydrofolate is bound by residues R1219, 1244–1247 (MRVL), and N1261. The active-site Proton donor is the H1263. 1295–1299 (DEGVD) is a binding site for (6R)-10-formyltetrahydrofolate. 1325–1328 (HKAE) contributes to the N(1)-(5-phospho-beta-D-ribosyl)glycinamide binding site.

This sequence in the N-terminal section; belongs to the GARS family. In the central section; belongs to the AIR synthase family. The protein in the C-terminal section; belongs to the GART family. As to quaternary structure, homodimer. Mg(2+) is required as a cofactor. Requires Mn(2+) as cofactor.

The enzyme catalyses 5-phospho-beta-D-ribosylamine + glycine + ATP = N(1)-(5-phospho-beta-D-ribosyl)glycinamide + ADP + phosphate + H(+). The catalysed reaction is 2-formamido-N(1)-(5-O-phospho-beta-D-ribosyl)acetamidine + ATP = 5-amino-1-(5-phospho-beta-D-ribosyl)imidazole + ADP + phosphate + H(+). It carries out the reaction N(1)-(5-phospho-beta-D-ribosyl)glycinamide + (6R)-10-formyltetrahydrofolate = N(2)-formyl-N(1)-(5-phospho-beta-D-ribosyl)glycinamide + (6S)-5,6,7,8-tetrahydrofolate + H(+). The protein operates within purine metabolism; IMP biosynthesis via de novo pathway; 5-amino-1-(5-phospho-D-ribosyl)imidazole from N(2)-formyl-N(1)-(5-phospho-D-ribosyl)glycinamide: step 2/2. It functions in the pathway purine metabolism; IMP biosynthesis via de novo pathway; N(1)-(5-phospho-D-ribosyl)glycinamide from 5-phospho-alpha-D-ribose 1-diphosphate: step 2/2. Its pathway is purine metabolism; IMP biosynthesis via de novo pathway; N(2)-formyl-N(1)-(5-phospho-D-ribosyl)glycinamide from N(1)-(5-phospho-D-ribosyl)glycinamide (10-formyl THF route): step 1/1. Functionally, trifunctional enzyme that catalyzes three distinct reactions as part of the 'de novo' inosine monophosphate biosynthetic pathway. This Drosophila melanogaster (Fruit fly) protein is Trifunctional purine biosynthetic protein adenosine-3.